The sequence spans 209 residues: Orotate phosphoribosyltransferase (209 aa).

5-phospho-alpha-D-ribose 1-diphosphate is bound by residues R96, K100, H102, and 122-130; that span reads EDLISTGGS. S126 provides a ligand contact to orotate.

Belongs to the purine/pyrimidine phosphoribosyltransferase family. PyrE subfamily. Homodimer. Requires Mg(2+) as cofactor.

It catalyses the reaction orotidine 5'-phosphate + diphosphate = orotate + 5-phospho-alpha-D-ribose 1-diphosphate. It functions in the pathway pyrimidine metabolism; UMP biosynthesis via de novo pathway; UMP from orotate: step 1/2. Catalyzes the transfer of a ribosyl phosphate group from 5-phosphoribose 1-diphosphate to orotate, leading to the formation of orotidine monophosphate (OMP). In Streptococcus agalactiae serotype III (strain NEM316), this protein is Orotate phosphoribosyltransferase.